Here is a 322-residue protein sequence, read N- to C-terminus: CRISPR-associated protein Cas1 1 (322 aa).

Positions 149, 214, and 229 each coordinate Mn(2+).

This sequence belongs to the CRISPR-associated endonuclease Cas1 family. Homodimer, forms a heterotetramer with a Cas2 homodimer. Mg(2+) is required as a cofactor. Mn(2+) serves as cofactor.

Functionally, CRISPR (clustered regularly interspaced short palindromic repeat), is an adaptive immune system that provides protection against mobile genetic elements (viruses, transposable elements and conjugative plasmids). CRISPR clusters contain spacers, sequences complementary to antecedent mobile elements, and target invading nucleic acids. CRISPR clusters are transcribed and processed into CRISPR RNA (crRNA). Acts as a dsDNA endonuclease. Involved in the integration of spacer DNA into the CRISPR cassette. This Methanobrevibacter ruminantium (strain ATCC 35063 / DSM 1093 / JCM 13430 / OCM 146 / M1) (Methanobacterium ruminantium) protein is CRISPR-associated protein Cas1 1.